The sequence spans 245 residues: Sec-independent protein translocase protein TatC (245 aa).

A run of 6 helical transmembrane segments spans residues 17–37, 73–93, 107–127, 159–179, 191–207, and 210–230; these read FISV…RSYI, FFAA…KFVA, FVSF…FVVV, VVVA…FAKI, FRIA…FMTP, and VLSQ…SILI.

It belongs to the TatC family. The Tat system comprises two distinct complexes: a TatABC complex, containing multiple copies of TatA, TatB and TatC subunits, and a separate TatA complex, containing only TatA subunits. Substrates initially bind to the TatABC complex, which probably triggers association of the separate TatA complex to form the active translocon.

The protein localises to the cell inner membrane. Part of the twin-arginine translocation (Tat) system that transports large folded proteins containing a characteristic twin-arginine motif in their signal peptide across membranes. Together with TatB, TatC is part of a receptor directly interacting with Tat signal peptides. In Campylobacter jejuni subsp. jejuni serotype O:2 (strain ATCC 700819 / NCTC 11168), this protein is Sec-independent protein translocase protein TatC.